We begin with the raw amino-acid sequence, 949 residues long: RNA polymerase-associated protein RapA (949 aa).

In terms of domain architecture, Helicase ATP-binding spans 164 to 332; that stretch reads EVADRIAPRV…FARLRLLDPN (169 aa). Residue 177–184 participates in ATP binding; it reads DEVGLGKT. A DEAH box motif is present at residues 278-281; it reads DEAH. The region spanning 474-628 is the Helicase C-terminal domain; the sequence is RVEWLIDQLK…TCPTGNALQH (155 aa).

The protein belongs to the SNF2/RAD54 helicase family. RapA subfamily. In terms of assembly, interacts with the RNAP. Has a higher affinity for the core RNAP than for the holoenzyme. Its ATPase activity is stimulated by binding to RNAP.

Its function is as follows. Transcription regulator that activates transcription by stimulating RNA polymerase (RNAP) recycling in case of stress conditions such as supercoiled DNA or high salt concentrations. Probably acts by releasing the RNAP, when it is trapped or immobilized on tightly supercoiled DNA. Does not activate transcription on linear DNA. Probably not involved in DNA repair. This Pseudomonas fluorescens (strain ATCC BAA-477 / NRRL B-23932 / Pf-5) protein is RNA polymerase-associated protein RapA.